The sequence spans 130 residues: Histone H2A.1 (130 aa).

Positions 1-22 (MSGGKGKAGSSEKASTSRSAKA) are disordered. The residue at position 2 (Ser2) is an N-acetylserine. N6-acetyllysine is present on residues Lys5 and Lys7. Gln105 is modified (N5-methylglutamine). Ser127 bears the Phosphoserine mark. The [ST]-Q motif motif lies at 127–128 (SQ).

Belongs to the histone H2A family. The nucleosome is a histone octamer containing two molecules each of H2A, H2B, H3 and H4 assembled in one H3-H4 heterotetramer and two H2A-H2B heterodimers. The octamer wraps approximately 147 bp of DNA. Phosphorylated to form H2AS128ph (gamma-H2A) in response to DNA double-strand breaks (DSBs) generated by exogenous genotoxic agents and by stalled replication forks. Phosphorylation is dependent on the DNA damage checkpoint kinases MEC1/ATR and TEL1/ATM, spreads on either side of a detected DSB site and may mark the surrounding chromatin for recruitment of proteins required for DNA damage signaling and repair. Gamma-H2A is removed from the DNA prior to the strand invasion-primer extension step of the repair process and subsequently dephosphorylated. Dephosphorylation is necessary for efficient recovery from the DNA damage checkpoint. Post-translationally, acetylated by ESA1 to form H2AK4ac and H2AK7ac.

The protein localises to the nucleus. It is found in the chromosome. In terms of biological role, core component of nucleosome which plays a central role in DNA double strand break (DSB) repair. Nucleosomes wrap and compact DNA into chromatin, limiting DNA accessibility to the cellular machineries which require DNA as a template. Histones thereby play a central role in transcription regulation, DNA repair, DNA replication and chromosomal stability. DNA accessibility is regulated via a complex set of post-translational modifications of histones, also called histone code, and nucleosome remodeling. The chain is Histone H2A.1 (HTA1) from Lodderomyces elongisporus (strain ATCC 11503 / CBS 2605 / JCM 1781 / NBRC 1676 / NRRL YB-4239) (Yeast).